Here is a 42-residue protein sequence, read N- to C-terminus: Large ribosomal subunit protein bL36 (42 aa).

The protein belongs to the bacterial ribosomal protein bL36 family.

This chain is Large ribosomal subunit protein bL36, found in Wolbachia pipientis subsp. Culex pipiens (strain wPip).